Consider the following 136-residue polypeptide: Small ribosomal subunit protein uS8c (136 aa).

Belongs to the universal ribosomal protein uS8 family. As to quaternary structure, part of the 30S ribosomal subunit.

It localises to the plastid. One of the primary rRNA binding proteins, it binds directly to 16S rRNA central domain where it helps coordinate assembly of the platform of the 30S subunit. The chain is Small ribosomal subunit protein uS8c (rps8) from Helicosporidium sp. subsp. Simulium jonesii (Green alga).